A 269-amino-acid polypeptide reads, in one-letter code: Tryptophan synthase alpha chain (269 aa).

Catalysis depends on proton acceptor residues E49 and D60.

Belongs to the TrpA family. Tetramer of two alpha and two beta chains.

The enzyme catalyses (1S,2R)-1-C-(indol-3-yl)glycerol 3-phosphate + L-serine = D-glyceraldehyde 3-phosphate + L-tryptophan + H2O. The protein operates within amino-acid biosynthesis; L-tryptophan biosynthesis; L-tryptophan from chorismate: step 5/5. Functionally, the alpha subunit is responsible for the aldol cleavage of indoleglycerol phosphate to indole and glyceraldehyde 3-phosphate. The protein is Tryptophan synthase alpha chain of Actinobacillus pleuropneumoniae serotype 3 (strain JL03).